The following is a 299-amino-acid chain: CMRF35-like molecule 8 (299 aa).

An N-terminal signal peptide occupies residues 1-17 (MWLPWALLLLWVPGCFA). Topologically, residues 18–180 (LSKCRTVAGP…TEEVVNSQLP (163 aa)) are extracellular. Positions 19–123 (SKCRTVAGPV…HDPVVEVEVS (105 aa)) constitute an Ig-like V-type domain. Cysteine 36 and cysteine 103 form a disulfide bridge. Asparagine 83 and asparagine 92 each carry an N-linked (GlcNAc...) asparagine glycan. Residues 181–201 (LLLSLLALLLLLLVGASLLAW) traverse the membrane as a helical segment. The Cytoplasmic segment spans residues 202–299 (RMFQKWIKAG…DSDYSVIRKT (98 aa)). The interval 278-299 (RIAAQRPREEEPDSDYSVIRKT) is disordered. Tyrosine 293 is modified (phosphotyrosine).

Belongs to the CD300 family. In terms of assembly, upon tyrosine-phosphorylation, interacts with PTN6/SHP-1 and PTPN11/SHP-2 and INPP5D. Post-translationally, phosphorylated on tyrosine. In terms of processing, N-glycosylated. As to expression, expressed not only by natural killer (NK) cells but also by T-cell subsets, B-cells, dendritic cells, mast cells, granulocytes and monocytes.

The protein localises to the cell membrane. Its function is as follows. Inhibitory receptor which may contribute to the down-regulation of cytolytic activity in natural killer (NK) cells, and to the down-regulation of mast cell degranulation. Negatively regulates the Toll-like receptor (TLR) signaling mediated by MYD88 but not TRIF through activation of PTPN6. This Homo sapiens (Human) protein is CMRF35-like molecule 8 (CD300A).